The primary structure comprises 202 residues: Ribonuclease HII (202 aa).

The region spanning Leu14–Ala202 is the RNase H type-2 domain. The a divalent metal cation site is built by Asp20, Glu21, and Asp111.

This sequence belongs to the RNase HII family. Mn(2+) is required as a cofactor. Requires Mg(2+) as cofactor.

The protein localises to the cytoplasm. It carries out the reaction Endonucleolytic cleavage to 5'-phosphomonoester.. Endonuclease that specifically degrades the RNA of RNA-DNA hybrids. In Rhizorhabdus wittichii (strain DSM 6014 / CCUG 31198 / JCM 15750 / NBRC 105917 / EY 4224 / RW1) (Sphingomonas wittichii), this protein is Ribonuclease HII.